We begin with the raw amino-acid sequence, 129 residues long: Lysozyme C (129 aa).

The C-type lysozyme domain maps to 1-129 (KVYGRCELAA…VHAWIRGCRL (129 aa)). 4 cysteine pairs are disulfide-bonded: Cys6–Cys127, Cys30–Cys115, Cys64–Cys80, and Cys76–Cys94. Active-site residues include Glu35 and Asp52.

The protein belongs to the glycosyl hydrolase 22 family. Monomer.

It is found in the secreted. The enzyme catalyses Hydrolysis of (1-&gt;4)-beta-linkages between N-acetylmuramic acid and N-acetyl-D-glucosamine residues in a peptidoglycan and between N-acetyl-D-glucosamine residues in chitodextrins.. In terms of biological role, lysozymes have primarily a bacteriolytic function; those in tissues and body fluids are associated with the monocyte-macrophage system and enhance the activity of immunoagents. This chain is Lysozyme C (LYZ), found in Tragopan temminckii (Temminck's tragopan).